A 274-amino-acid polypeptide reads, in one-letter code: Large ribosomal subunit protein uL2 (274 aa).

A disordered region spans residues 223-274 (VVMNPVDHPHGGGEGRTSGGRHPVSPWGVPTKGFKTRKNKRTDKYIVRRRTK). Residues 256–274 (FKTRKNKRTDKYIVRRRTK) are compositionally biased toward basic residues.

Belongs to the universal ribosomal protein uL2 family. As to quaternary structure, part of the 50S ribosomal subunit. Forms a bridge to the 30S subunit in the 70S ribosome.

Functionally, one of the primary rRNA binding proteins. Required for association of the 30S and 50S subunits to form the 70S ribosome, for tRNA binding and peptide bond formation. It has been suggested to have peptidyltransferase activity; this is somewhat controversial. Makes several contacts with the 16S rRNA in the 70S ribosome. The protein is Large ribosomal subunit protein uL2 of Vibrio atlanticus (strain LGP32) (Vibrio splendidus (strain Mel32)).